The primary structure comprises 576 residues: Citrinin biosynthesis transcriptional activator ctnR (576 aa).

The interval 1–27 (MLSHEMASTAHRQPSRPTTRQRQRTGR) is disordered. A DNA-binding region (zn(2)-C6 fungal-type) is located at residues 29 to 56 (CEECRRRKLRCDGQQPRCGVCVDSGVTC). A disordered region spans residues 102–148 (STPLTNDHHDGCSVSSASSRSDSNPPPTVSEPDMSLPNTTTSVSSAP). Low complexity predominate over residues 114–124 (SVSSASSRSDS). The segment covering 137-148 (LPNTTTSVSSAP) has biased composition (polar residues).

The protein localises to the nucleus. In terms of biological role, transcription factor that regulates the expression of the gene cluster that mediates the biosynthesis of the mycotoxin citrinin, a hepato-nephrotoxic compound to humans due to inhibition of respiration complex III. This is Citrinin biosynthesis transcriptional activator ctnR from Monascus purpureus (Red mold).